Consider the following 351-residue polypeptide: Homeobox-leucine zipper protein HOX23 (351 aa).

The segment at 34–128 (LQDHAHGGHG…SFESGNKLEP (95 aa)) is disordered. Positions 56–65 (SPFLPDLAMD) are enriched in low complexity. The segment at residues 101-160 (GGEKKRRLSVEQVRTLERSFESGNKLEPERKAQLARALGLQPRQVAIWFQNRRARWKTKQ) is a DNA-binding region (homeobox). The span at 114–128 (RTLERSFESGNKLEP) shows a compositional bias: basic and acidic residues. The tract at residues 159–203 (KQLEKDFDALRRQLDAARAENDALLSLNSKLHAEIVALKGGAAAA) is leucine-zipper. The tract at residues 227–263 (EASCSNRSENSSEINLDISRPAPPPPPPPANESPVNR) is disordered. A compositionally biased stretch (polar residues) spans 228–240 (ASCSNRSENSSEI). The span at 247 to 257 (PAPPPPPPPAN) shows a compositional bias: pro residues.

It belongs to the HD-ZIP homeobox family. Class I subfamily. In terms of tissue distribution, expressed in seedlings, roots, stems, leaf sheaths and panicles.

Its subcellular location is the nucleus. Its function is as follows. Probable transcription factor. The polypeptide is Homeobox-leucine zipper protein HOX23 (HOX23) (Oryza sativa subsp. indica (Rice)).